The following is a 93-amino-acid chain: Em protein H2 (93 aa).

The tract at residues 1 to 93 is disordered; that stretch reads MASGQQERSQ…IDESKFKTKS (93 aa). Composition is skewed to basic and acidic residues over residues 9-19, 31-52, and 73-93; these read SQLDRKAREGE, LEAH…REQM, and GGER…KTKS.

The protein belongs to the small hydrophilic plant seed protein family.

Its function is as follows. It is thought to provide protection for the cytoplasm during the desiccation stage of embryo development. The sequence is that of Em protein H2 (EMH2) from Triticum aestivum (Wheat).